Consider the following 81-residue polypeptide: Large ribosomal subunit protein bL31 (81 aa).

4 residues coordinate Zn(2+): C16, C18, C36, and C39.

Belongs to the bacterial ribosomal protein bL31 family. Type A subfamily. In terms of assembly, part of the 50S ribosomal subunit. Zn(2+) is required as a cofactor.

Functionally, binds the 23S rRNA. This chain is Large ribosomal subunit protein bL31, found in Rhodopirellula baltica (strain DSM 10527 / NCIMB 13988 / SH1).